The sequence spans 108 residues: SPPGNWQKADVTFDSNTAFESLVVSPDKKTVENVGVSQVAPDNPERFDGSPCVLGSPGFRSGKHFFEVKYGTQREWAVGLAGKSVKRKGYLRLVPEERIWQKGLWWLG.

Residues serine 1–glycine 108 enclose the B30.2/SPRY domain.

It belongs to the ohanin/vespryn family. In terms of tissue distribution, expressed by the venom gland.

The protein resides in the secreted. Neurotoxin that produces dose-dependent hypolocomotion and hyperalgesia in mice. May directly act on the central nervous system, as it is 6500-fold more potent when administered intracerebroventricularly than intraperitoneal. In Naja kaouthia (Monocled cobra), this protein is Thaicobrin.